Reading from the N-terminus, the 125-residue chain is Cytochrome c-556 (125 aa).

Met13, Cys113, Cys116, and His117 together coordinate heme. Heme c contacts are provided by Met13, Cys113, Cys116, and His117.

Monomer. In terms of processing, binds 1 heme c group covalently per subunit.

Functionally, low-spin monoheme cytochrome c. This is Cytochrome c-556 from Agrobacterium tumefaciens (strain apple 185).